The chain runs to 267 residues: Ribosyldihydronicotinamide dehydrogenase-like protein traD (267 aa).

FAD contacts are provided by residues His9, 15–16 (LN), and 100–103 (LWWF). A substrate-binding site is contributed by 122 to 124 (GHG). Residues 152-155 (TLGG) and Tyr160 each bind FAD.

The protein belongs to the NAD(P)H dehydrogenase (quinone) family. In terms of assembly, homodimer. It depends on FAD as a cofactor.

It functions in the pathway secondary metabolite biosynthesis. Its function is as follows. Ribosyldihydronicotinamide dehydrogenase-like protein; part of the tra gene cluster that produces terrestric acid. The clavatol biosynthesis cluster cla and the terrestric acid cluster tra are both involved in the production of peniphenones and penilactones. The non-reducing PKS claF is responsible for the formation of clavatol from successive condensations of 3 malonyl-CoA units, presumably with a simple acetyl-CoA starter unit, and 2 methylation steps. The esterase claE probably collaborates with claF by catalyzing the hydrolysis of ACP-bound acyl intermediates to free the ACP from stalled intermediates. The clavatol oxidase claD then converts clavatol to hydroxyclavatol. Spontaneous dehydration of hydroxyclavatol leads to the accumulation of the highly active ortho-quinone methide. On the other hand, the PKS-NRPS hybrid traA is involved in the formation of crustosic acid, with the help of traB and traD. The polyketide synthase module (PKS) of traA is responsible for the synthesis of the polyketide backbone via the condensation of an acetyl-CoA starter unit with 3 malonyl-CoA units. The downstream nonribosomal peptide synthetase (NRPS) module then amidates the carboxyl end of the polyketide with L-malic acid. Because traA lacks a designated enoylreductase (ER) domain, the required activity is provided the enoyl reductase traG. Crustosic acid undergoes decarboxylation and isomerization to the terrestric acid, catalyzed by the 2-oxoglutarate-dependent dioxygenase traH. Both acids are further converted to the 2 gamma-butyrolactones (R)-5-methyltetronic acid and (S)-5-carboxylmethyltetronic acid, with involvement of the cytochrome P450 monooxygenase claJ. Spontaneous addition of the methide to these gamma-butyrolactones leads to peniphenone D and penilactone D, which undergo again stereospecific attacking by methide to give penilactones A and B. This Penicillium crustosum (Blue mold fungus) protein is Ribosyldihydronicotinamide dehydrogenase-like protein traD.